The following is a 101-amino-acid chain: MSAATIKDPRDVVLAPVVSEKSYGLIDEGKYTFLVDPRSNKTEIKLAVEKIFSVKVESINTINRAGKRKRTKFGWGTRKNTKRAIVTLKEGTIDIFGGPLA.

It belongs to the universal ribosomal protein uL23 family. As to quaternary structure, part of the 50S ribosomal subunit. Contacts protein L29, and trigger factor when it is bound to the ribosome.

One of the early assembly proteins it binds 23S rRNA. One of the proteins that surrounds the polypeptide exit tunnel on the outside of the ribosome. Forms the main docking site for trigger factor binding to the ribosome. The sequence is that of Large ribosomal subunit protein uL23 from Pseudarthrobacter chlorophenolicus (strain ATCC 700700 / DSM 12829 / CIP 107037 / JCM 12360 / KCTC 9906 / NCIMB 13794 / A6) (Arthrobacter chlorophenolicus).